The sequence spans 4910 residues: Midasin (4910 aa).

AAA-ATPase protomer stretches follow at residues 305–528 and 636–975; these read IQNS…DILF and MEQI…TDII. Residues 315-322 and 653-660 contribute to the ATP site; these read GKAGSGKT and GETGTGKT. The interaction with RIX1 stretch occupies residues 695–803; the sequence is VNSKTVAVPI…KKFEAQSSSI (109 aa). Thr1026 is subject to Phosphothreonine. AAA-ATPase protomer stretches follow at residues 1054–1280, 1345–1624, 1732–1985, and 2036–2286; these read HYII…WALR, KGMR…VEFI, RVVR…QLLI, and VYES…DELH. ATP contacts are provided by residues 1083-1090, 1368-1375, 1747-1754, and 2054-2061; these read GPTSSGKT, GETGCGKT, GSPGVGKT, and GPSNSGKT. A linker region spans residues 2372 to 4075; that stretch reads EVGKWANNVL…DGEGAQNNNK (1704 aa). Ser2971 carries the post-translational modification Phosphoserine. Disordered stretches follow at residues 4045–4547, 4555–4574, and 4579–4600; these read SPQP…EKMD, SDID…SGFI, and SEED…EDDS. The segment covering 4078–4088 has biased composition (acidic residues); it reads EQDEDLTEDAQ. Residues 4089-4098 are compositionally biased toward basic and acidic residues; sequence NENKEQQDKD. Over residues 4099 to 4154 the composition is skewed to acidic residues; it reads ERDDENEDDAVEMEGDMAGELEDLSNGEENDDEDTDSEEEELDEEIDDLNEDDPNA. Over residues 4155–4174 the composition is skewed to basic and acidic residues; it reads IDDKMWDDKASDNSKEKDTD. 3 stretches are compositionally biased toward acidic residues: residues 4202-4244, 4251-4274, and 4288-4358; these read GDED…EDLE, ETLD…DVDM, and GNED…EEEL. Ser4353 is subject to Phosphoserine. Residues 4359–4372 are compositionally biased toward basic and acidic residues; sequence KQDAAMEENKEKGG. Residue Thr4388 is modified to Phosphothreonine. Composition is skewed to basic and acidic residues over residues 4435 to 4447 and 4481 to 4495; these read DVTK…REEA and LEKN…EHVE. Over residues 4498–4516 the composition is skewed to polar residues; the sequence is NTETDTQALGSATQDQLQT. Over residues 4517–4531 the composition is skewed to acidic residues; the sequence is IDEDMAIDDDREEQE. Ser4555 bears the Phosphoserine mark. Residues 4557 to 4570 are compositionally biased toward basic and acidic residues; the sequence is IDAHDANNDVDSKK. Residues 4704 to 4899 form the VWFA domain; that stretch reads QIMIALDDSK…SELPEMLSLI (196 aa).

Belongs to the midasin family. As to quaternary structure, associates with pre-60S ribosomes in the nucleoplasm. Interacts (via its hexameric AAA ATPase ring) with the RIX1 complex (via RIX1); this interaction is crucial for recruitment of MDN1 to the pre-ribosomal particle. Interacts (via VWFA/MIDAS domain) with YTM1 (via UBL domain). Interacts (via VWFA/MIDAS domain) with RSA4 (via UBL domain).

It is found in the nucleus. It localises to the nucleolus. The protein localises to the nucleoplasm. Functionally, nuclear chaperone required for maturation and nuclear export of pre-60S ribosome subunits. Functions at successive maturation steps to remove ribosomal factors at critical transition points, first driving the exit of early pre-60S particles from the nucleolus and then driving late pre-60S particles from the nucleus. At an early stage in 60S maturation, mediates the dissociation of the NOP7 complex (YTM1-ERB1-NOP7) from early pre-60S particles, rendering them competent for export from the nucleolus to the nucleoplasm. Subsequently recruited to the nucleoplasmic particles through interaction with the RIX1 complex. This binding is only possible if the 5S RNP at the central protuberance has undergone the rotation to complete its maturation. After remodeling, removes the ribosome biogenesis factor RSA4 in an ATP hydrolysis-driven step from pre-60S ribosomal subunits, rendering them competent for export from the nucleoplasm to the cytoplasm. Activates the GTPase activity of NOG2, which disengages from the pre-60S particle upon GTP hydrolysis, thus freeing its binding site for the nuclear export factor NMD3. In Saccharomyces cerevisiae (strain ATCC 204508 / S288c) (Baker's yeast), this protein is Midasin (MDN1).